Reading from the N-terminus, the 167-residue chain is Peptide deformylase (167 aa).

Fe cation-binding residues include cysteine 91 and histidine 133. The active site involves glutamate 134. Histidine 137 lines the Fe cation pocket.

Belongs to the polypeptide deformylase family. Fe(2+) is required as a cofactor.

It catalyses the reaction N-terminal N-formyl-L-methionyl-[peptide] + H2O = N-terminal L-methionyl-[peptide] + formate. Functionally, removes the formyl group from the N-terminal Met of newly synthesized proteins. Requires at least a dipeptide for an efficient rate of reaction. N-terminal L-methionine is a prerequisite for activity but the enzyme has broad specificity at other positions. This chain is Peptide deformylase, found in Tolumonas auensis (strain DSM 9187 / NBRC 110442 / TA 4).